The sequence spans 75 residues: uncharacterized protein (75 aa).

An N-terminal signal peptide occupies residues 1 to 25; the sequence is MSLFYRAVALGTLSALVWYSTSILA. A helical membrane pass occupies residues 55–75; the sequence is YRALLAFSLVICGTLLVTCVI.

Its subcellular location is the host endoplasmic reticulum membrane. Its function is as follows. Plays a role in the down-regulation of the host NKG2D ligand MICA by targeting ER-resident MICA to proteasomal degradation prior to the GPI-anchoring step. In turn, MICA reduction diminishes NK-cell killing of HCMV-infected cells. This is an uncharacterized protein from Homo sapiens (Human).